Reading from the N-terminus, the 145-residue chain is Basic phospholipase A2 cPt10 (145 aa).

An N-terminal signal peptide occupies residues 1–21; it reads MYPAHLLVLLAVCVSLLGASA. Residues 22-27 constitute a propeptide that is removed on maturation; it reads IPPLPL. 7 disulfide bridges follow: C38/C98, C54/C144, C56/C72, C71/C125, C78/C118, C87/C111, and C105/C116. Residues Y55, G57, and G59 each contribute to the Ca(2+) site. The active site involves H75. D76 contacts Ca(2+). D119 is an active-site residue.

The protein belongs to the phospholipase A2 family. Group I subfamily. D49 sub-subfamily. Requires Ca(2+) as cofactor. As to expression, expressed by the venom gland.

It is found in the secreted. The catalysed reaction is a 1,2-diacyl-sn-glycero-3-phosphocholine + H2O = a 1-acyl-sn-glycero-3-phosphocholine + a fatty acid + H(+). In terms of biological role, PLA2 catalyzes the calcium-dependent hydrolysis of the 2-acyl groups in 3-sn-phosphoglycerides. This chain is Basic phospholipase A2 cPt10, found in Laticauda semifasciata (Black-banded sea krait).